A 522-amino-acid chain; its full sequence is Involucrin (522 aa).

Over residues 1-15 (MSQQHTLPVTLSPAL) the composition is skewed to polar residues. Disordered regions lie at residues 1-126 (MSQQ…LEEE), 159-329 (QEGQ…LVQQ), and 366-496 (QEGQ…QPVL). The span at 76-91 (EQQQQEPQEQELQQQH) shows a compositional bias: low complexity. Positions 92–126 (WEQHEEHQKAENPEQQLKQEKAQRDQQLNEHLEEE) are enriched in basic and acidic residues. Over residues 169-181 (QEGQLELPEQQEG) the composition is skewed to low complexity. Composition is skewed to basic and acidic residues over residues 182–198 (QLEHLEQQEGQLKHLDQ), 214–231 (KHLEQQEGQLKHLEHQKG), 252–264 (QLKHLDQQEKQPE), 274–290 (KHLEQQEGQLEHMEHQE), and 305–323 (QLEEQEGQPKHLEEEEGQL). Over residues 375-389 (QQQGQLEVSEQQVGQ) the composition is skewed to low complexity. Composition is skewed to basic and acidic residues over residues 391 to 401 (KHLEQEGKQLE), 409 to 418 (QLKHLEKQEA), and 431 to 465 (KHPEQQEKQLEHPEQQEGQLKHLEQQEGQLKDLEQ). Residues 466 to 479 (QKGQLEQQQGQLEQ) show a composition bias toward low complexity.

The protein belongs to the involucrin family. In terms of assembly, directly or indirectly cross-linked to cornifelin (CNFN). Substrate of transglutaminase. Specific glutamines or lysines are cross-linked to keratins, desmoplakin and to inter involucrin molecules. Keratinocytes of epidermis and other stratified squamous epithelia.

Its subcellular location is the cytoplasm. Part of the insoluble cornified cell envelope (CE) of stratified squamous epithelia. The protein is Involucrin (IVL) of Hylobates lar (Lar gibbon).